The sequence spans 321 residues: N-acetyl-gamma-glutamyl-phosphate reductase (321 aa).

C131 is a catalytic residue.

This sequence belongs to the NAGSA dehydrogenase family. Type 1 subfamily.

Its subcellular location is the cytoplasm. The catalysed reaction is N-acetyl-L-glutamate 5-semialdehyde + phosphate + NADP(+) = N-acetyl-L-glutamyl 5-phosphate + NADPH + H(+). It functions in the pathway amino-acid biosynthesis; L-arginine biosynthesis; N(2)-acetyl-L-ornithine from L-glutamate: step 3/4. Its function is as follows. Catalyzes the NADPH-dependent reduction of N-acetyl-5-glutamyl phosphate to yield N-acetyl-L-glutamate 5-semialdehyde. In Christiangramia forsetii (strain DSM 17595 / CGMCC 1.15422 / KT0803) (Gramella forsetii), this protein is N-acetyl-gamma-glutamyl-phosphate reductase.